Reading from the N-terminus, the 151-residue chain is Chromophore lyase CpcS/CpeS homolog (151 aa).

This sequence belongs to the CpcS/CpeS biliprotein lyase family.

It is found in the plastid. It localises to the chloroplast. In terms of biological role, might function to covalently attach a chromophore to Cys residue(s) of phycobiliproteins. This chain is Chromophore lyase CpcS/CpeS homolog, found in Gracilaria tenuistipitata var. liui (Red alga).